We begin with the raw amino-acid sequence, 82 residues long: Photosystem I iron-sulfur center (82 aa).

4Fe-4S ferredoxin-type domains lie at 2-31 and 40-69; these read AHTV…MVPW and IAAA…IRVY. Residues Cys11, Cys14, Cys17, Cys21, Cys49, Cys52, Cys55, and Cys59 each coordinate [4Fe-4S] cluster.

In terms of assembly, the cyanobacterial PSI reaction center is composed of one copy each of PsaA,B,C,D,E,F,I,J,K,L,M and X, and forms trimeric complexes. [4Fe-4S] cluster is required as a cofactor.

It is found in the cellular thylakoid membrane. It carries out the reaction reduced [plastocyanin] + hnu + oxidized [2Fe-2S]-[ferredoxin] = oxidized [plastocyanin] + reduced [2Fe-2S]-[ferredoxin]. In terms of biological role, apoprotein for the two 4Fe-4S centers FA and FB of photosystem I (PSI); essential for photochemical activity. FB is the terminal electron acceptor of PSI, donating electrons to ferredoxin. The C-terminus interacts with PsaA/B/D and helps assemble the protein into the PSI complex. Required for binding of PsaD and PsaE to PSI. PSI is a plastocyanin/cytochrome c6-ferredoxin oxidoreductase, converting photonic excitation into a charge separation, which transfers an electron from the donor P700 chlorophyll pair to the spectroscopically characterized acceptors A0, A1, FX, FA and FB in turn. The sequence is that of Photosystem I iron-sulfur center from Synechococcus sp. (strain JA-3-3Ab) (Cyanobacteria bacterium Yellowstone A-Prime).